The chain runs to 171 residues: MDYFTLFGLPASYTLSLEQLAVRYQDLQRQYHPDKFASAPAAEQLAAVQHSATINQAWQTLRHPLTRAEYLLSLHGFDLASEQHTVRDTAFLMEQLELREELDEIGQAKDDARLEGFIKRVKALFDTRQQLMVDQLHNESWEAAADTVRKLRFLDKLRSSAEELEEKLLDF.

The J domain maps to 2–74 (DYFTLFGLPA…LTRAEYLLSL (73 aa)).

Belongs to the HscB family. In terms of assembly, interacts with HscA and stimulates its ATPase activity. Interacts with IscU.

Functionally, co-chaperone involved in the maturation of iron-sulfur cluster-containing proteins. Seems to help targeting proteins to be folded toward HscA. This chain is Co-chaperone protein HscB, found in Klebsiella pneumoniae subsp. pneumoniae (strain ATCC 700721 / MGH 78578).